The sequence spans 342 residues: tRNA N6-adenosine threonylcarbamoyltransferase (342 aa).

2 residues coordinate Fe cation: histidine 120 and histidine 124. Residues valine 142–glycine 146, aspartate 175, glycine 188, aspartate 192, and asparagine 281 each bind substrate. Aspartate 310 serves as a coordination point for Fe cation.

The protein belongs to the KAE1 / TsaD family. Requires Fe(2+) as cofactor.

It is found in the cytoplasm. It carries out the reaction L-threonylcarbamoyladenylate + adenosine(37) in tRNA = N(6)-L-threonylcarbamoyladenosine(37) in tRNA + AMP + H(+). Its function is as follows. Required for the formation of a threonylcarbamoyl group on adenosine at position 37 (t(6)A37) in tRNAs that read codons beginning with adenine. Is involved in the transfer of the threonylcarbamoyl moiety of threonylcarbamoyl-AMP (TC-AMP) to the N6 group of A37, together with TsaE and TsaB. TsaD likely plays a direct catalytic role in this reaction. This is tRNA N6-adenosine threonylcarbamoyltransferase from Geobacillus thermodenitrificans (strain NG80-2).